A 142-amino-acid polypeptide reads, in one-letter code: Hemoglobin subunit alpha (142 aa).

S1 is subject to N-acetylserine. The Globin domain maps to 1–142; it reads SLSDKDKADV…LALALGQKYR (142 aa). H58 provides a ligand contact to O2. Residue H88 coordinates heme b.

Belongs to the globin family. In terms of assembly, heterotetramer of two alpha chains and two beta chains. As to expression, red blood cells.

In terms of biological role, involved in oxygen transport from gills to the various peripheral tissues. This is Hemoglobin subunit alpha (hba) from Catostomus clarkii (Desert sucker).